The chain runs to 158 residues: Transcription elongation factor GreA (158 aa).

A coiled-coil region spans residues 3 to 75 (TEKTYPMTQE…TQLENMIRNA (73 aa)).

Belongs to the GreA/GreB family.

Necessary for efficient RNA polymerase transcription elongation past template-encoded arresting sites. The arresting sites in DNA have the property of trapping a certain fraction of elongating RNA polymerases that pass through, resulting in locked ternary complexes. Cleavage of the nascent transcript by cleavage factors such as GreA or GreB allows the resumption of elongation from the new 3'terminus. GreA releases sequences of 2 to 3 nucleotides. The sequence is that of Transcription elongation factor GreA from Bacillus cereus (strain ATCC 14579 / DSM 31 / CCUG 7414 / JCM 2152 / NBRC 15305 / NCIMB 9373 / NCTC 2599 / NRRL B-3711).